Consider the following 394-residue polypeptide: Bone morphogenetic protein 2 (394 aa).

The first 19 residues, 1–19 (MVAGTRCLLVLLLPQVLLG), serve as a signal peptide directing secretion. Positions 20-280 (GAAGLIPELG…GHPLHKREKR (261 aa)) are cleaved as a propeptide — cleaved by PCSK5. Phosphoserine is present on Ser86. N-linked (GlcNAc...) asparagine glycosylation is found at Asn134, Asn162, and Asn198. Positions 269–291 (GKGHPLHKREKRQAKHKQRKRLK) are disordered. Over residues 272 to 291 (HPLHKREKRQAKHKQRKRLK) the composition is skewed to basic residues. Cystine bridges form between Cys294–Cys359, Cys323–Cys391, and Cys327–Cys393. Asn336 carries N-linked (GlcNAc...) asparagine glycosylation.

Belongs to the TGF-beta family. As to quaternary structure, homodimer; disulfide-linked. Interacts with SOSTDC1. Interacts with GREM2, RGMA, RGMB and RGMC. Interacts with ASPN. Interacts with MAFP5. Interacts with FBN1 (via N-terminal domain) and FBN2. Interacts with type I receptor BMPR1A. Interacts with type II receptor BMPR2. Interacts with SCUBE3. Interacts with TNFAIP6 (primarily via Link domain); this interaction is inhibited by hyaluronan. Interacts with ERFE. Interacts with BMPR1A/ALK3; the interaction may induce HAMP expression. Forms heterodimers with BMP6 in vitro; the heterodimer then binds to its receptor BMPR1A /ALK3 and may induce HAMP expression. Interacts with TGFBR3.

Its subcellular location is the secreted. Functionally, growth factor of the TGF-beta superfamily that plays essential roles in many developmental processes, including cardiogenesis, neurogenesis, and osteogenesis. Induces cartilage and bone formation. Initiates the canonical BMP signaling cascade by associating with type I receptor BMPR1A and type II receptor BMPR2. Once all three components are bound together in a complex at the cell surface, BMPR2 phosphorylates and activates BMPR1A. In turn, BMPR1A propagates signal by phosphorylating SMAD1/5/8 that travel to the nucleus and act as activators and repressors of transcription of target genes. Also acts to promote expression of HAMP, via the interaction with its receptor BMPR1A/ALK3. Can also signal through non-canonical pathways such as ERK/MAP kinase signaling cascade that regulates osteoblast differentiation. Also stimulates the differentiation of myoblasts into osteoblasts via the EIF2AK3-EIF2A-ATF4 pathway by stimulating EIF2A phosphorylation which leads to increased expression of ATF4 which plays a central role in osteoblast differentiation. Acts as a positive regulator of odontoblast differentiation during mesenchymal tooth germ formation, expression is repressed during the bell stage by MSX1-mediated inhibition of CTNNB1 signaling. The protein is Bone morphogenetic protein 2 (Bmp2) of Mus musculus (Mouse).